Consider the following 1029-residue polypeptide: Protein phosphatase 1 regulatory subunit 12A (1029 aa).

The KVKF motif motif lies at 35 to 38 (KVKF). ANK repeat units lie at residues 39–68 (DDGAVFLAACSSGDTDEVLKLLHRGADINY), 72–101 (DGLTALHQACIDDNVDMVKFLVENGANINQ), 105–134 (EGWIPLHAAASCGYLDIAEFLIGQGAHVGA), 138–164 (EGDTPLDIAEEEAMEELLQNEVNRQGV), 198–227 (SGGTALHVAAAKGYTEVLKLLIQAGYDVNI), and 231–260 (DGWTPLHAAAHWGKEEACRILVDNLCDMET). (3S)-3-hydroxyasparagine; by HIF1AN occurs at positions 67 and 100. Asn226 is subject to (3S)-3-hydroxyasparagine; by HIF1AN. The segment at 290–786 (LHSEKRDKKS…APSSSSLSTL (497 aa)) is disordered. The segment covering 291-300 (HSEKRDKKSP) has biased composition (basic and acidic residues). Ser299 bears the Phosphoserine mark. Polar residues predominate over residues 302 to 314 (IESTANMENNQPQ). Residues 318-353 (KNKETLIIEPEKNASRIESLEHEKADEEEEGKKDES) are compositionally biased toward basic and acidic residues. Positions 357 to 369 (SEEDEEDDSESEA) are enriched in acidic residues. Over residues 385-402 (TSSTQAAPAAVTAPTLSS) the composition is skewed to low complexity. Phosphoserine is present on residues Ser422 and Ser432. Over residues 422-432 (SPKEEERKDES) the composition is skewed to basic and acidic residues. Position 443 is a phosphothreonine (Thr443). Ser445 carries the post-translational modification Phosphoserine; by NUAK1. Tyr446 is subject to Phosphotyrosine. Low complexity predominate over residues 469–480 (RSASSPRLSSSL). A Phosphoserine; by NUAK1 modification is found at Ser472. Position 473 is a phosphoserine; by CDK1 (Ser473). Ser477 carries the phosphoserine modification. Residues 481–491 (DNKEKEKDNKG) are compositionally biased toward basic and acidic residues. Residues Ser507 and Ser509 each carry the phosphoserine modification. Residues 540-551 (NSSINEGSTYHR) show a composition bias toward polar residues. Residues 564-578 (SCSVPSTTSTPTVTS) are compositionally biased toward low complexity. Over residues 585 to 594 (SLPSSTSTAA) the composition is skewed to polar residues. Residues 596–610 (TPPGSSSAGTQSSTS) are compositionally biased toward low complexity. 2 positions are modified to phosphoserine: Ser601 and Ser618. The span at 614–625 (WAEDSTEKEKDS) shows a compositional bias: basic and acidic residues. The span at 626 to 656 (APTAVTIPVAPTVVNAAAPSTTTLTTTTAGT) shows a compositional bias: low complexity. The span at 671 to 680 (VRDEESESQR) shows a compositional bias: basic and acidic residues. The segment at 680 to 863 (RKARSRQARQ…VSFWTQDSDE (184 aa)) is interaction with ROCK2. Basic residues predominate over residues 681–691 (KARSRQARQSR). Phosphoserine; by PKA and PKG; in vitro occurs at positions 690 and 693. Thr694 is modified (phosphothreonine; by ROCK1, ROCK2, CDC42BP, ZIPK/DAPK3 and RAF1). Residues 716–765 (RTREQENEEKEKEEKEKQDKEKQEEKKESEASREDEYKQKYSRTYDETYT) show a composition bias toward basic and acidic residues. The segment covering 771–786 (STSSSSAPSSSSLSTL) has biased composition (low complexity). Ser801 carries the phosphoserine modification. A disordered region spans residues 808–927 (AYSRGLAKEN…PYSSRLEKDD (120 aa)). Positions 813 to 839 (LAKENEREGEKKEEEKEGEDKSQPKSI) are enriched in basic and acidic residues. Over residues 840 to 851 (RERRRPREKRRS) the composition is skewed to basic residues. Ser851 carries the post-translational modification Phosphoserine; by ROCK2. 2 positions are modified to phosphoserine: Ser861 and Ser870. Residues 866–882 (QERQSDTEDGSSKRETQ) show a composition bias toward basic and acidic residues. Positions 883–897 (TDSVSRYDSSSTSSS) are enriched in low complexity. Ser902 and Ser907 each carry phosphoserine. Phosphoserine; by NUAK1 is present on Ser909. The segment covering 913–927 (LEDRKPYSSRLEKDD) has biased composition (basic and acidic residues). At Ser994 the chain carries Phosphoserine.

As to quaternary structure, PP1 comprises a catalytic subunit, PPP1CA, PPP1CB or PPP1CC, and one or several targeting or regulatory subunits. PPP1R12A mediates binding to myosin. Interacts with ARHA and CIT. Binds PPP1R12B, ROCK1 and IL16. Interacts directly with PRKG1. Non-covalent dimer of 2 dimers; PRKG1-PRKG1 and PPP1R12A-PPP1R12A. Interacts with SMTNL1. Interacts with PPP1CB; the interaction is direct. Interacts (when phosphorylated at Ser-445, Ser-472 and Ser-910) with 14-3-3. Interacts with ROCK1 and ROCK2. Interacts with isoform 1 and isoform 2 of ZIPK/DAPK3. Interacts with RAF1. Interacts with HIF1AN. Interacts with NCKAP1L. Post-translationally, phosphorylated by CIT (Rho-associated kinase). Phosphorylated cooperatively by ROCK1 and CDC42BP on Thr-694. Phosphorylated on upon DNA damage, probably by ATM or ATR. In vitro, phosphorylation of Ser-693 by PKA and PKG appears to prevent phosphorylation of the inhibitory site Thr-694, probably mediated by PRKG1. Phosphorylation at Ser-445, Ser-472 and Ser-909 by NUAK1 promotes interaction with 14-3-3, leading to inhibit interaction with myosin light chain MLC2, preventing dephosphorylation of MLC2. May be phosphorylated at Thr-694 by DMPK; may inhibit the myosin phosphatase activity. Phosphorylated at Ser-473 by CDK1 during mitosis, creating docking sites for the POLO box domains of PLK1. Subsequently, PLK1 binds and phosphorylates PPP1R12A. Expressed in striated and vascular smooth muscle, specificcally in type 2a fibers (at protein level). Expression levels are 20-30% higher in developed males than females (at protein level).

Its subcellular location is the cytoplasm. It localises to the cytoskeleton. The protein resides in the stress fiber. Functionally, key regulator of protein phosphatase 1C (PPP1C). Mediates binding to myosin. As part of the PPP1C complex, involved in dephosphorylation of PLK1. Capable of inhibiting HIF1AN-dependent suppression of HIF1A activity. The protein is Protein phosphatase 1 regulatory subunit 12A of Mus musculus (Mouse).